Reading from the N-terminus, the 795-residue chain is Nucleolar complex protein 3 homolog (795 aa).

3 disordered regions span residues 1 to 88, 124 to 144, and 168 to 190; these read MKPM…PLDM, RDDV…EPEK, and IPSE…EVPE. Composition is skewed to basic and acidic residues over residues 22-39 and 46-58; these read LKLD…ESSA and QKQL…DVRS. Acidic residues predominate over residues 74–88; the sequence is EEEYEVEEESLPLDM. Over residues 171–181 the composition is skewed to acidic residues; the sequence is EEQEENEEEMD. The stretch at 447–492 forms a coiled coil; the sequence is SYKDKKKNLSRMQRKWKKAEEKLERELLEAEASESKEKKLKLNTET.

It belongs to the CBF/MAK21 family.

It is found in the nucleus. It localises to the nucleolus. This is Nucleolar complex protein 3 homolog (noc3l) from Xenopus laevis (African clawed frog).